We begin with the raw amino-acid sequence, 185 residues long: Ribosome-recycling factor (185 aa).

It belongs to the RRF family.

The protein localises to the cytoplasm. Responsible for the release of ribosomes from messenger RNA at the termination of protein biosynthesis. May increase the efficiency of translation by recycling ribosomes from one round of translation to another. This chain is Ribosome-recycling factor, found in Mycobacterium avium (strain 104).